Consider the following 393-residue polypeptide: Chalcone synthase DIII (393 aa).

Residue Cys-164 is part of the active site.

Belongs to the thiolase-like superfamily. Chalcone/stilbene synthases family.

The catalysed reaction is (E)-4-coumaroyl-CoA + 3 malonyl-CoA + 3 H(+) = 2',4,4',6'-tetrahydroxychalcone + 3 CO2 + 4 CoA. It functions in the pathway secondary metabolite biosynthesis; flavonoid biosynthesis. In terms of biological role, the primary product of this enzyme is 4,2',4',6'-tetrahydroxychalcone (also termed naringenin-chalcone or chalcone) which can under specific conditions spontaneously isomerize into naringenin. The protein is Chalcone synthase DIII (CHS-DIII) of Ipomoea batatas (Sweet potato).